Consider the following 545-residue polypeptide: Membrane protein insertase YidC (545 aa).

4 consecutive transmembrane segments (helical) span residues 350–370, 424–444, 461–481, and 498–518; these read IIGNWGWAIIVLTIIVKAVLY, LPMLLQIPVFIGLYWALFASV, ADPYYILPIIMAATMFAQTYL, and PLVFSVMFFFFPAGLVLYWVV.

This sequence belongs to the OXA1/ALB3/YidC family. Type 1 subfamily. In terms of assembly, interacts with the Sec translocase complex via SecD. Specifically interacts with transmembrane segments of nascent integral membrane proteins during membrane integration.

It localises to the cell inner membrane. In terms of biological role, required for the insertion and/or proper folding and/or complex formation of integral membrane proteins into the membrane. Involved in integration of membrane proteins that insert both dependently and independently of the Sec translocase complex, as well as at least some lipoproteins. Aids folding of multispanning membrane proteins. This is Membrane protein insertase YidC from Neisseria meningitidis serogroup C (strain 053442).